The following is a 471-amino-acid chain: Cytochrome P450 monooxygenase afvE (471 aa).

The helical transmembrane segment at 265–285 threads the bilayer; it reads IIFYHFELSTPVAFFIIFAVY. Cys-410 provides a ligand contact to heme.

Belongs to the cytochrome P450 family. Requires heme as cofactor.

The protein resides in the membrane. Its pathway is secondary metabolite biosynthesis. In terms of biological role, cytochrome P450 monooxygenase; part of the gene cluster that mediates the biosynthesis of aflavarin, a bicoumarin that exhibits anti-insectan activity against the fungivorous beetle C.hemipterus. The chain is Cytochrome P450 monooxygenase afvE from Aspergillus flavus (strain ATCC 200026 / FGSC A1120 / IAM 13836 / NRRL 3357 / JCM 12722 / SRRC 167).